Consider the following 68-residue polypeptide: Large ribosomal subunit protein bL32 (68 aa).

Positions 1–25 (MAVPQNKITKSRRGQRRSHDALVAG) are disordered.

The protein belongs to the bacterial ribosomal protein bL32 family.

This Dinoroseobacter shibae (strain DSM 16493 / NCIMB 14021 / DFL 12) protein is Large ribosomal subunit protein bL32.